Reading from the N-terminus, the 990-residue chain is MASSTATVSLHNLVKLCCKRNSTSKVFVSLYNQLEEKSPIQDNDYLSNLLQPDIKNKSKRESSLITEYILALAISSESQLEKFWKFLPEILLENQIHYMIELNSILLSKSNIERPSSDIFKEIVNNCFFKYTSSYISSLFPGISATQVSLLNHIIVVWCSVIRRSPFHLNTSSFKQLAVKIVSVLTECDLRNSLNYFISNTSSILNTDDLQVDSVQDSDDKKIAAIRSTTTIQLVNNISSINPKSRKATQLNVIKRYLWLNSIMKNWKFSNDVFLKQFEQNFLPNSSNNLKKPYVLAFELICAFFKGIVTSICSNESKYVLFNWKNFIITRLPTLLNDIKFTTSHVAPTSNDSSFKQETLDDAIINAFESFEDPVNKVLTQFSIDNLSICDLRQTFIKSCIYNKLIPVMSYHKIFTADNTVTDQFLNNGIEQVGQITSIRDEFETKLLNINTEFTTLEDSGLIEYINSLPGLLEFSATKQLELSETVDQVIEHLIDEKNIEKLYRLLLSVCNNLTTLNLICFNSNCGPFSILYKLINYIDNEDFNVDDDDNFQETYAFFGIIILAILLIIETFKIDYSQITVTNSYIVDYINEFYYRLCDSLTNISTSDTEEDNTIISNYNDLISDWINALFDDNNDGLSDDLIKSVNVKQIYKMIPIIYQQSIIATNSNKIDIKILNNGIDYLSQMFLIPCTLNIIKWLLRRIWADDPTLDCLPVQVLHELIKSNMGESDEPTSESKLFFQIVLKISGNSIISTLKKLNNWENSNLIKDIIEKVSNSVDPMYLENDLSIKLNERVNLYEQLKTNVINLVNNMNIYDYQFLNIFSSIDRDNELIRYIVEEITSYQKTNGGNEDTKLFINLSIFMILLDAIDNDDDKQYWIKRIKDTMVPVSSNSSGENRFDISMDYHYSSIFNNSDETSNNDYLFSGENNNSSVEIEGLKRKIGRHESLLNSFNKIKEFCDTEVQSTFVKSLRTFRDKLINELEVFTLNV.

Belongs to the Mediator complex subunit 5 family. In terms of assembly, component of the Mediator complex.

Its subcellular location is the nucleus. Functionally, component of the Mediator complex, a coactivator involved in the regulated transcription of nearly all RNA polymerase II-dependent genes. Mediator functions as a bridge to convey information from gene-specific regulatory proteins to the basal RNA polymerase II transcription machinery. Mediator is recruited to promoters by direct interactions with regulatory proteins and serves as a scaffold for the assembly of a functional preinitiation complex with RNA polymerase II and the general transcription factors. This chain is Mediator of RNA polymerase II transcription subunit 5 (NUT1), found in Debaryomyces hansenii (strain ATCC 36239 / CBS 767 / BCRC 21394 / JCM 1990 / NBRC 0083 / IGC 2968) (Yeast).